The sequence spans 83 residues: Short neurotoxin OKI-Ed (83 aa).

An N-terminal signal peptide occupies residues 1–21; that stretch reads MKTLLLTLVVVTIVCLDLGYT. 4 disulfide bridges follow: Cys24–Cys45, Cys38–Cys62, Cys64–Cys75, and Cys76–Cys81.

This sequence belongs to the three-finger toxin family. Short-chain subfamily. Type I alpha-neurotoxin sub-subfamily. In terms of tissue distribution, expressed by the venom gland.

It localises to the secreted. Functionally, binds to muscle nicotinic acetylcholine receptor (nAChR) and inhibit acetylcholine from binding to the receptor, thereby impairing neuromuscular transmission. The chain is Short neurotoxin OKI-Ed from Laticauda semifasciata (Black-banded sea krait).